Reading from the N-terminus, the 331-residue chain is Protein RecA (331 aa).

61 to 68 is an ATP binding site; sequence GPESSGKT.

It belongs to the RecA family.

Its subcellular location is the cytoplasm. Functionally, can catalyze the hydrolysis of ATP in the presence of single-stranded DNA, the ATP-dependent uptake of single-stranded DNA by duplex DNA, and the ATP-dependent hybridization of homologous single-stranded DNAs. It interacts with LexA causing its activation and leading to its autocatalytic cleavage. This is Protein RecA from Mycoplasma mobile (strain ATCC 43663 / 163K / NCTC 11711) (Mesomycoplasma mobile).